Reading from the N-terminus, the 256-residue chain is uncharacterized protein (256 aa).

Positions 1-24 (MIKRVNKLVLGISFLFLIISIFAG) are cleaved as a signal peptide. Cys25 is lipidated: N-palmitoyl cysteine. Residue Cys25 is the site of S-diacylglycerol cysteine attachment.

Belongs to the staphylococcal tandem lipoprotein family.

The protein localises to the cell membrane. This is an uncharacterized protein from Staphylococcus aureus (strain Mu50 / ATCC 700699).